The primary structure comprises 266 residues: Killer cell lectin-like receptor 5 (266 aa).

The Cytoplasmic portion of the chain corresponds to 1-44 (MSEPEVTYSTVRLHKSSGLQRLVSHEEIQGPGEAGYRKCSVPWQ). The chain crosses the membrane as a helical; Signal-anchor for type II membrane protein span at residues 45–66 (LTVRSLGIFCFLLLVTVAVLAV). At 67–266 (KIFQYSQHKQ…CGKKLDHFPG (200 aa)) the chain is on the extracellular side. N-linked (GlcNAc...) asparagine glycans are attached at residues Asn87 and Asn104. The C-type lectin domain maps to 143–261 (GVKHWFCYGT…SYFCICGKKL (119 aa)). 4 disulfides stabilise this stretch: Cys149–Cys154, Cys167–Cys255, Cys171–Cys257, and Cys236–Cys249. N-linked (GlcNAc...) asparagine glycosylation occurs at Asn250.

Homodimer; disulfide-linked. In terms of tissue distribution, mostly expressed in NK cells, but also observed on NK T and memory T-cells.

It is found in the membrane. In terms of biological role, receptor on natural killer (NK) cells for class I MHC. The sequence is that of Killer cell lectin-like receptor 5 (Klra5) from Mus musculus (Mouse).